Consider the following 604-residue polypeptide: Putative O-acetyltransferase SAV0974 (604 aa).

11 consecutive transmembrane segments (helical) span residues 15-35 (YMPG…IYHL), 43-63 (GFLG…SLLL), 85-105 (LLPA…LLKS), 150-170 (AIEE…LLTI), 176-196 (IGFI…FIYS), 212-232 (LQTL…KLKN), 240-260 (YVID…FFII), 267-287 (IYDG…ASVV), 310-330 (YSLY…YVDG), 332-352 (IPVY…ELSY), and 377-397 (FIRM…LVGA). Catalysis depends on residues Ser-459, Asp-581, and His-584.

Belongs to the acyltransferase 3 family.

The protein resides in the cell membrane. The sequence is that of Putative O-acetyltransferase SAV0974 from Staphylococcus aureus (strain Mu50 / ATCC 700699).